Reading from the N-terminus, the 214-residue chain is Melanoregulin (214 aa).

The short motif at 162-172 is the Cholesterol-binding sequence motif element; it reads LSERYLLVVDR. Phosphoserine is present on Ser213.

Belongs to the melanoregulin family. As to quaternary structure, identified in a complex with RILP and DCTN1; interacts directly with RILP, but does not interact directly with DCTN1. Interacts with PRPH2. Post-translationally, palmitoylated. Palmitoylation is required to maintain the protein at the melanosome membrane. As to expression, detected in melanocytes. Expressed in retina, in retinal pigment epithelium (at protein level). Widely expressed with higher expression in skin, heart, liver, testis and thymus. Detected in retina, in retinal pigment epithelium cells.

It is found in the apical cell membrane. Its subcellular location is the melanosome membrane. The protein localises to the lysosome membrane. It localises to the cytoplasmic vesicle membrane. Its function is as follows. Probably functions as a cargo-recognition protein that couples cytoplasmic vesicles to the transport machinery. Plays a role in hair pigmentation, a process that involves shedding of melanosome-containing vesicles from melanocytes, followed by phagocytosis of the melanosome-containing vesicles by keratinocytes. Functions on melanosomes as receptor for RILP and the complex formed by RILP and DCTN1, and thereby contributes to retrograde melanosome transport from the cell periphery to the center. Overexpression causes accumulation of late endosomes and/or lysosomes at the microtubule organising center (MTOC) at the center of the cell. Probably binds cholesterol and requires the presence of cholesterol in membranes to function in microtubule-mediated retrograde organelle transport. Binds phosphatidylinositol 3-phosphate, phosphatidylinositol 4-phosphate, phosphatidylinositol 5-phosphate and phosphatidylinositol 3,5-bisphosphate, but not phosphatidylinositol 3,4-bisphosphate or phosphatidylinositol 4,5-bisphosphate. Required for normal phagosome clearing and normal activation of lysosomal enzymes in lysosomes from retinal pigment epithelium cells. Required for normal degradation of the lipofuscin component N-retinylidene-N-retinylethanolamine (A2E) in the eye. May function in membrane fusion and regulate the biogenesis of disk membranes of photoreceptor rod cells. The protein is Melanoregulin (Mreg) of Mus musculus (Mouse).